The following is a 350-amino-acid chain: CMP-N-acetylneuraminate-beta-galactosamide-alpha-2,3-sialyltransferase 2 (350 aa).

At 1–6 (MKCSLR) the chain is on the cytoplasmic side. A helical; Signal-anchor for type II membrane protein transmembrane segment spans residues 7–27 (VWFLSMAFLLVFIMSLLFTYS). Residues 28–350 (HHSMATLPYL…ASKIEVYRGN (323 aa)) are Lumenal-facing. 3 cysteine pairs are disulfide-bonded: Cys70-Cys75, Cys72-Cys149, and Cys152-Cys291. Residues Gln116, Asn157, and Asn180 each contribute to the substrate site. Asn211 is a glycosylation site (N-linked (GlcNAc...) asparagine). Tyr240, Tyr276, Gly280, Gly300, His309, and His326 together coordinate substrate.

Belongs to the glycosyltransferase 29 family. Homodimer; disulfide-linked. Homodimer formation occurs in the endoplasmic reticulum. Post-translationally, the soluble form derives from the membrane form by proteolytic processing. N-glycosylated; necessary for proper exit from endoplasmic reticulum and trafficking to the Golgi apparatus.

It is found in the golgi apparatus. The protein resides in the golgi stack membrane. The protein localises to the secreted. The enzyme catalyses a beta-D-galactosyl-(1-&gt;3)-N-acetyl-alpha-D-galactosaminyl derivative + CMP-N-acetyl-beta-neuraminate = an N-acetyl-alpha-neuraminyl-(2-&gt;3)-beta-D-galactosyl-(1-&gt;3)-N-acetyl-alpha-D-galactosaminyl derivative + CMP + H(+). It catalyses the reaction a ganglioside GM1 (d18:1(4E)) + CMP-N-acetyl-beta-neuraminate = a ganglioside GD1a (d18:1(4E)) + CMP + H(+). It carries out the reaction ganglioside GM1 (d18:1(4E)/18:0) + CMP-N-acetyl-beta-neuraminate = ganglioside GD1a (18:1(4E)/18:0) + CMP + H(+). The catalysed reaction is a ganglioside GA1 + CMP-N-acetyl-beta-neuraminate = a ganglioside GM1b + CMP + H(+). The enzyme catalyses a ganglioside GA1 (d18:1(4E)) + CMP-N-acetyl-beta-neuraminate = a ganglioside GM1b (d18:1(4E)) + CMP + H(+). It catalyses the reaction a globoside GalGb4Cer + CMP-N-acetyl-beta-neuraminate = a globoside MSGG + CMP + H(+). It functions in the pathway protein modification; protein glycosylation. It participates in glycolipid biosynthesis. A beta-galactoside alpha2-3 sialyltransferase primarily involved in terminal sialylation of ganglio and globo series glycolipids. Catalyzes the transfer of sialic acid (N-acetyl-neuraminic acid; Neu5Ac) from the nucleotide sugar donor CMP-Neu5Ac onto acceptor Galbeta-(1-&gt;3)-GalNAc-terminated glycoconjugates through an alpha2-3 linkage. Sialylates GM1/GM1a, GA1/asialo-GM1 gangliosides to form GD1a and GM1b, respectively. Together with ST3GAL3, primarily responsible for biosynthesis of brain gangliosides that function as ligand for myelin-associated glycoprotein MAG on axons, regulating MAG expression and axonal myelin stability and regeneration. Responsible for the sialylation of the pluripotent stem cell- and cancer stem cell-associated antigen SSEA3, forming SSEA4. Sialylates with low efficiency asialofetuin, presumably onto O-glycosidically linked Galbeta-(1-&gt;3)-GalNAc-O-Ser. The chain is CMP-N-acetylneuraminate-beta-galactosamide-alpha-2,3-sialyltransferase 2 (St3gal2) from Rattus norvegicus (Rat).